Here is a 358-residue protein sequence, read N- to C-terminus: Alanine racemase (358 aa).

Lysine 34 functions as the Proton acceptor; specific for D-alanine in the catalytic mechanism. At lysine 34 the chain carries N6-(pyridoxal phosphate)lysine. Arginine 130 is a binding site for substrate. The Proton acceptor; specific for L-alanine role is filled by tyrosine 254. Position 302 (methionine 302) interacts with substrate.

It belongs to the alanine racemase family. Pyridoxal 5'-phosphate serves as cofactor.

It carries out the reaction L-alanine = D-alanine. It participates in amino-acid biosynthesis; D-alanine biosynthesis; D-alanine from L-alanine: step 1/1. Its function is as follows. Catalyzes the interconversion of L-alanine and D-alanine. May also act on other amino acids. This chain is Alanine racemase (alr), found in Actinobacillus succinogenes (strain ATCC 55618 / DSM 22257 / CCUG 43843 / 130Z).